The following is a 236-amino-acid chain: 2-C-methyl-D-erythritol 4-phosphate cytidylyltransferase (236 aa).

The protein belongs to the IspD/TarI cytidylyltransferase family. IspD subfamily. Homodimer.

It carries out the reaction 2-C-methyl-D-erythritol 4-phosphate + CTP + H(+) = 4-CDP-2-C-methyl-D-erythritol + diphosphate. The protein operates within isoprenoid biosynthesis; isopentenyl diphosphate biosynthesis via DXP pathway; isopentenyl diphosphate from 1-deoxy-D-xylulose 5-phosphate: step 2/6. In terms of biological role, catalyzes the formation of 4-diphosphocytidyl-2-C-methyl-D-erythritol from CTP and 2-C-methyl-D-erythritol 4-phosphate (MEP). In Shigella flexneri serotype 5b (strain 8401), this protein is 2-C-methyl-D-erythritol 4-phosphate cytidylyltransferase.